The sequence spans 418 residues: uncharacterized protein (418 aa).

Residues 1 to 24 are disordered; the sequence is MSGTAGFITVSPGPPTEAPGGFPR.

This sequence to A.pernix APE_1276 and S.solfataricus SSO2105.

This is an uncharacterized protein from Aeropyrum pernix (strain ATCC 700893 / DSM 11879 / JCM 9820 / NBRC 100138 / K1).